The following is a 254-amino-acid chain: 3-deoxy-manno-octulosonate cytidylyltransferase (254 aa).

Belongs to the KdsB family.

It is found in the cytoplasm. It carries out the reaction 3-deoxy-alpha-D-manno-oct-2-ulosonate + CTP = CMP-3-deoxy-beta-D-manno-octulosonate + diphosphate. The protein operates within nucleotide-sugar biosynthesis; CMP-3-deoxy-D-manno-octulosonate biosynthesis; CMP-3-deoxy-D-manno-octulosonate from 3-deoxy-D-manno-octulosonate and CTP: step 1/1. It participates in bacterial outer membrane biogenesis; lipopolysaccharide biosynthesis. In terms of biological role, activates KDO (a required 8-carbon sugar) for incorporation into bacterial lipopolysaccharide in Gram-negative bacteria. This Chlamydia caviae (strain ATCC VR-813 / DSM 19441 / 03DC25 / GPIC) (Chlamydophila caviae) protein is 3-deoxy-manno-octulosonate cytidylyltransferase.